The sequence spans 263 residues: HTH-type transcriptional repressor NanR (263 aa).

The segment at 1–25 (MDVMNAFDSQAEDSPTSLGRSLRRR) is disordered. The 69-residue stretch at 30–98 (KKLSEMVEEE…NGERARVSRP (69 aa)) folds into the HTH gntR-type domain. Positions 58–77 (ERELMAFFNVGRPSVREALA) form a DNA-binding region, H-T-H motif.

It belongs to the NanR family.

Its function is as follows. Transcriptional repressor that controls expression of the genes required for the catabolism of sialic acids. This chain is HTH-type transcriptional repressor NanR, found in Salmonella choleraesuis (strain SC-B67).